Here is a 247-residue protein sequence, read N- to C-terminus: DNA polymerase sliding clamp (247 aa).

Belongs to the PCNA family. As to quaternary structure, homotrimer. The subunits circularize to form a toroid; DNA passes through its center. Replication factor C (RFC) is required to load the toroid on the DNA.

In terms of biological role, sliding clamp subunit that acts as a moving platform for DNA processing. Responsible for tethering the catalytic subunit of DNA polymerase and other proteins to DNA during high-speed replication. This is DNA polymerase sliding clamp from Methanosphaerula palustris (strain ATCC BAA-1556 / DSM 19958 / E1-9c).